Consider the following 669-residue polypeptide: DNA mismatch repair protein MutL (669 aa).

A disordered region spans residues 343-408 (SAFHRAEPEE…RAPSDSSVRE (66 aa)). Residues 344–356 (AFHRAEPEERESQ) are compositionally biased toward basic and acidic residues. Polar residues predominate over residues 357–372 (PETTPQYSPQSVSTTV). Over residues 390–408 (TDYEIKPRDRAPSDSSVRE) the composition is skewed to basic and acidic residues.

The protein belongs to the DNA mismatch repair MutL/HexB family.

Its function is as follows. This protein is involved in the repair of mismatches in DNA. It is required for dam-dependent methyl-directed DNA mismatch repair. May act as a 'molecular matchmaker', a protein that promotes the formation of a stable complex between two or more DNA-binding proteins in an ATP-dependent manner without itself being part of a final effector complex. In Vibrio parahaemolyticus serotype O3:K6 (strain RIMD 2210633), this protein is DNA mismatch repair protein MutL.